A 1427-amino-acid chain; its full sequence is Protein NPAT (1427 aa).

The segment at 1–318 is interaction with MIZF; the sequence is MLLPSDVARL…EEAIQDILEQ (318 aa). The LisH domain occupies 3-35; it reads LPSDVARLVLGYLQQENLISTCQTFILESSDLK. 2 required for activation of histone gene transcription and interaction with MIZF regions span residues 5–25 and 121–145; these read SDVA…STCQ and KRQR…YLSG. The tract at residues 199–231 is disordered; that stretch reads KKAHASLMSPGRRKSESQRKSTTLSGPHSTIRN. Serine 207 carries the phosphoserine modification. The segment covering 218-231 has biased composition (polar residues); that stretch reads KSTTLSGPHSTIRN. The mediates transcriptional activation stretch occupies residues 262–338; the sequence is KLAENINKFL…FDLFDYGKTK (77 aa). 2 positions are modified to phosphoserine: serine 554 and serine 599. Polar residues predominate over residues 628 to 644; sequence SLSSTKQPSNDSASVEL. 2 disordered regions span residues 628 to 669 and 683 to 732; these read SLSS…VKEE and EKVA…SAEI. The required for acceleration of G1 phase stretch occupies residues 629–653; the sequence is LSSTKQPSNDSASVELNHTENEAQA. A compositionally biased stretch (low complexity) spans 654-665; it reads SKSENSQEPSSS. A compositionally biased stretch (polar residues) spans 695-711; that stretch reads VENSHSLPPESVCSSVG. 2 positions are modified to phosphoserine; by CDK2: serine 775 and serine 779. Required for acceleration of G1 phase regions lie at residues 828–853 and 1039–1054; these read QNED…IQLM and KSEE…SIVP. Disordered stretches follow at residues 1095-1121 and 1133-1152; these read FPNL…EKEK and SAIS…KVSP. Residues 1097–1114 are compositionally biased toward polar residues; it reads NLDSPNVSSTLKPPSNNA. Residue serine 1100 is modified to Phosphoserine; by CDK2. Glycyl lysine isopeptide (Lys-Gly) (interchain with G-Cter in SUMO2) cross-links involve residues lysine 1116 and lysine 1149. The span at 1140-1151 shows a compositional bias: basic and acidic residues; it reads TIRETQSEKKVS. Phosphoserine occurs at positions 1151 and 1200. Lysine 1228 carries the post-translational modification N6-acetyllysine. The tract at residues 1228-1252 is required for acceleration of G1 phase; that stretch reads KDLKQEQTKSASSLITTEMLQDIQR. Disordered stretches follow at residues 1253–1327 and 1348–1413; these read HSSV…SENS and SATP…FPAG. Serine 1254 is subject to Phosphoserine. A Phosphothreonine; by CDK2 modification is found at threonine 1270. A compositionally biased stretch (basic and acidic residues) spans 1276 to 1285; sequence GEKHKEEPID. Lysine 1280 is covalently cross-linked (Glycyl lysine isopeptide (Lys-Gly) (interchain with G-Cter in SUMO2)). Positions 1325-1349 are required for acceleration of G1 phase; sequence ENSVNMAAHTLMILSRAAISRTTSA. Positions 1348-1365 are enriched in polar residues; the sequence is SATPLKDNTQQFRASSRS. A Phosphothreonine; by CDK2 modification is found at threonine 1350. Residues 1371–1382 show a composition bias toward basic and acidic residues; that stretch reads KIEELDERERNS. Residues 1383–1394 are compositionally biased toward polar residues; it reads RPSSKNLTNSSI. The span at 1396–1406 shows a compositional bias: basic residues; that stretch reads MKKKKIKKKKL.

This sequence belongs to the NPAT family. In terms of assembly, interacts with the cylin/CDK complexes CCNE1/CDK2 and CCNA1/CDK2. Interacts with BZW1, CASP8AP2, CREBBP, MIZF and YY1. Interacts with the RUVBL1, RUVBL2 and TRRAP subunits of the NuA4 complex. May also interact with GAPDH, NME1, NME2 and STIP1. Post-translationally, phosphorylated at Ser-775, Ser-779, Ser-1100, Thr-1270 and Thr-1350 by CCNE1/CDK2 at G1-S transition and until prophase, which promotes association with histone gene clusters and stimulates activation of histone transcription. Also phosphorylated by CCNA1/CDK2 in vitro. As to expression, ubiquitously expressed.

The protein resides in the nucleus. The protein localises to the cajal body. Its function is as follows. Required for progression through the G1 and S phases of the cell cycle and for S phase entry. Activates transcription of the histone H2A, histone H2B, histone H3 and histone H4 genes in conjunction with MIZF. Also positively regulates the ATM, MIZF and PRKDC promoters. Transcriptional activation may be accomplished at least in part by the recruitment of the NuA4 histone acetyltransferase (HAT) complex to target gene promoters. The protein is Protein NPAT (NPAT) of Homo sapiens (Human).